The primary structure comprises 344 residues: Dihydroorotate dehydrogenase (quinone) (344 aa).

FMN contacts are provided by residues 65-69 (AGFDK) and threonine 89. Position 69 (lysine 69) interacts with substrate. A substrate-binding site is contributed by 114–118 (NRMGF). 2 residues coordinate FMN: asparagine 145 and asparagine 178. Asparagine 178 provides a ligand contact to substrate. Serine 181 (nucleophile) is an active-site residue. Asparagine 183 lines the substrate pocket. FMN is bound by residues lysine 215 and threonine 243. 244–245 (NT) contributes to the substrate binding site. FMN-binding positions include glycine 269, glycine 298, and 319-320 (YT).

This sequence belongs to the dihydroorotate dehydrogenase family. Type 2 subfamily. As to quaternary structure, monomer. FMN is required as a cofactor.

Its subcellular location is the cell membrane. The catalysed reaction is (S)-dihydroorotate + a quinone = orotate + a quinol. The protein operates within pyrimidine metabolism; UMP biosynthesis via de novo pathway; orotate from (S)-dihydroorotate (quinone route): step 1/1. In terms of biological role, catalyzes the conversion of dihydroorotate to orotate with quinone as electron acceptor. In Clavibacter michiganensis subsp. michiganensis (strain NCPPB 382), this protein is Dihydroorotate dehydrogenase (quinone).